The primary structure comprises 1127 residues: Cellulose synthase-like protein D1 (1127 aa).

The disordered stretch occupies residues 1-24; sequence MASKGILKNGGKPPTAPSSAAPTV. Transmembrane regions (helical) follow at residues 262–282 and 292–312; these read VISP…LFLM and AIWL…SWVL. Catalysis depends on residues Asp-392 and Asp-828. The next 6 helical transmembrane spans lie at 910-930, 936-956, 982-1002, 1025-1045, 1059-1079, and 1089-1109; these read VFLI…QFIV, TFLT…MLEI, LAAV…SFTL, SLMI…AVGF, LLGG…FAKG, and TIVY…WIAI.

Belongs to the glycosyltransferase 2 family. Plant cellulose synthase-like D subfamily.

Its subcellular location is the golgi apparatus membrane. Functionally, thought to be a Golgi-localized beta-glycan synthase that polymerize the backbones of noncellulosic polysaccharides (hemicelluloses) of plant cell wall. This Oryza sativa subsp. indica (Rice) protein is Cellulose synthase-like protein D1 (CSLD1).